We begin with the raw amino-acid sequence, 610 residues long: Elongation factor 4 (610 aa).

The tr-type G domain maps to 14 to 196; the sequence is NRIRNFSIIA…ALVANIPPPK (183 aa). GTP contacts are provided by residues 26–31 and 143–146; these read DHGKST and NKID.

This sequence belongs to the TRAFAC class translation factor GTPase superfamily. Classic translation factor GTPase family. LepA subfamily.

The protein localises to the cell inner membrane. It carries out the reaction GTP + H2O = GDP + phosphate + H(+). Functionally, required for accurate and efficient protein synthesis under certain stress conditions. May act as a fidelity factor of the translation reaction, by catalyzing a one-codon backward translocation of tRNAs on improperly translocated ribosomes. Back-translocation proceeds from a post-translocation (POST) complex to a pre-translocation (PRE) complex, thus giving elongation factor G a second chance to translocate the tRNAs correctly. Binds to ribosomes in a GTP-dependent manner. This Legionella pneumophila (strain Lens) protein is Elongation factor 4.